We begin with the raw amino-acid sequence, 309 residues long: Epidermal retinol dehydrogenase 2 (309 aa).

A helical membrane pass occupies residues 11 to 31 (LFIFLGKSLFSLLEAMIFALL). 44–68 (LITGAGSGLGRLLALQFARLGSVLV) is a binding site for NADP(+). S177 provides a ligand contact to substrate. Y190 functions as the Proton acceptor in the catalytic mechanism. A helical membrane pass occupies residues 270-290 (LLYFMMFLKSFLPLKTGLLIA).

It belongs to the short-chain dehydrogenases/reductases (SDR) family. Detected in adult lung. Detected at low levels in adult brain, heart, testis, placenta, cervix, pancreas, uterus, stomach, rectum, small intestine, colon, esophagus, thymus, skin, and skin keratinocyte. Expression is higher in psoriasis lesions relative to unaffected skin from psoriasis patients. Detected in fetal kidney, skin and lung.

The protein resides in the endoplasmic reticulum membrane. It carries out the reaction all-trans-retinol--[retinol-binding protein] + NAD(+) = all-trans-retinal--[retinol-binding protein] + NADH + H(+). The protein operates within cofactor metabolism; retinol metabolism. Oxidoreductase with strong preference for NAD. Active in both the oxidative and reductive directions. Oxidizes all-trans-retinol in all-trans-retinaldehyde. No activity was detected with 11-cis-retinol or 11-cis-retinaldehyde as substrates with either NAD(+)/NADH or NADP(+)/NADPH. The protein is Epidermal retinol dehydrogenase 2 of Homo sapiens (Human).